Reading from the N-terminus, the 273-residue chain is MCPTCPPSAASASSENNNTDNNDHLVLSSDSSHPANLIPALCAKFWTLGWVTGTGGGASIRDNDLVYLAPSGVQKELMKPEDIYVLSLAAQATSPNPKQRVYLRSPANYKPSQCTPLFLAAFTKRNAGCCIHTHSHWAVLVTLLLERERSSKEGDEEKGKVFEINNIEQIKGFGRGFGKSGNLGYHDTLRIPVIENTAHEEDLTEFLEEAMDKYPDTYAVLVRRHGVYVWGENVHKAKTMCESLDYLFQLAVEMKQLGLPWITDIEPTIPTRK.

The interval 1–27 (MCPTCPPSAASASSENNNTDNNDHLVL) is disordered. Cys-114 lines the substrate pocket. Zn(2+) is bound by residues His-132 and His-134. The active-site Proton donor/acceptor is the Glu-168. Residue His-225 coordinates Zn(2+).

It belongs to the aldolase class II family. MtnB subfamily. Zn(2+) serves as cofactor.

The protein localises to the cytoplasm. It carries out the reaction 5-(methylsulfanyl)-D-ribulose 1-phosphate = 5-methylsulfanyl-2,3-dioxopentyl phosphate + H2O. Its pathway is amino-acid biosynthesis; L-methionine biosynthesis via salvage pathway; L-methionine from S-methyl-5-thio-alpha-D-ribose 1-phosphate: step 2/6. Catalyzes the dehydration of methylthioribulose-1-phosphate (MTRu-1-P) into 2,3-diketo-5-methylthiopentyl-1-phosphate (DK-MTP-1-P). The polypeptide is Methylthioribulose-1-phosphate dehydratase (Sordaria macrospora (strain ATCC MYA-333 / DSM 997 / K(L3346) / K-hell)).